A 341-amino-acid chain; its full sequence is Gibberellin 2-beta-dioxygenase 5 (341 aa).

Residues 187-290 (REETCFLRLN…RFSMAFFLCP (104 aa)) form the Fe2OG dioxygenase domain. Tyrosine 198 is a binding site for 2-oxoglutarate. Residues histidine 213, aspartate 215, and histidine 271 each coordinate Fe cation. 2 residues coordinate 2-oxoglutarate: arginine 281 and serine 283.

The protein belongs to the iron/ascorbate-dependent oxidoreductase family. GA2OX subfamily. L-ascorbate is required as a cofactor. Fe(2+) serves as cofactor. Expressed in roots, leaves, culms, leaf sheaths and young panicles.

The protein resides in the cytoplasm. It localises to the nucleus. The enzyme catalyses gibberellin A1 + 2-oxoglutarate + O2 = gibberellin A8 + succinate + CO2. It participates in plant hormone biosynthesis; gibberellin biosynthesis. In terms of biological role, catalyzes the 2-beta-hydroxylation of several biologically active gibberellins (GAs), leading to the homeostatic regulation of their endogenous level. Catabolism of GAs plays a central role in plant development. In vitro, converts GA12 and GA53 to the corresponding 2-beta-hydroxylated products GA110 and GA97, respectively. This is Gibberellin 2-beta-dioxygenase 5 from Oryza sativa subsp. japonica (Rice).